The following is a 512-amino-acid chain: Probable DNA ligase (512 aa).

Glu-208 is a binding site for ATP. The active-site N6-AMP-lysine intermediate is the Lys-210. ATP contacts are provided by Arg-215, Arg-230, Glu-259, Phe-299, Arg-374, and Lys-380.

This sequence belongs to the ATP-dependent DNA ligase family. Requires Mg(2+) as cofactor.

It carries out the reaction ATP + (deoxyribonucleotide)n-3'-hydroxyl + 5'-phospho-(deoxyribonucleotide)m = (deoxyribonucleotide)n+m + AMP + diphosphate.. In terms of biological role, DNA ligase that seals nicks in double-stranded DNA during DNA replication, DNA recombination and DNA repair. The sequence is that of Probable DNA ligase from Streptomyces avermitilis (strain ATCC 31267 / DSM 46492 / JCM 5070 / NBRC 14893 / NCIMB 12804 / NRRL 8165 / MA-4680).